The chain runs to 163 residues: UPF0478 protein SERP1299 (163 aa).

Residues 7–27 (IAGIIAAIAFLILCIGIVVVL) form a helical membrane-spanning segment.

Belongs to the UPF0478 family.

It is found in the cell membrane. This chain is UPF0478 protein SERP1299, found in Staphylococcus epidermidis (strain ATCC 35984 / DSM 28319 / BCRC 17069 / CCUG 31568 / BM 3577 / RP62A).